Reading from the N-terminus, the 1072-residue chain is Zn(2)-C6 fungal-type transcription factor FTF1a (1072 aa).

Positions 178–205 (CMACRRKKIRCSGEKPACKHCLRSRILC) form a DNA-binding region, zn(2)-C6 fungal-type.

It localises to the nucleus. Functionally, zn(2)-C6 fungal-type transcription factor that has a role in the establishment of the fungus within the plant and/or the progress of the disease. Regulates the expression of virulence factors such as SIX1 and SIX6. The protein is Zn(2)-C6 fungal-type transcription factor FTF1a of Fusarium oxysporum f. sp. lycopersici (strain 4287 / CBS 123668 / FGSC 9935 / NRRL 34936) (Fusarium vascular wilt of tomato).